Reading from the N-terminus, the 258-residue chain is Large ribosomal subunit protein uL2x (258 aa).

The segment at histidine 211 to proline 231 is disordered.

This sequence belongs to the universal ribosomal protein uL2 family.

The polypeptide is Large ribosomal subunit protein uL2x (RPL8C) (Arabidopsis thaliana (Mouse-ear cress)).